A 1249-amino-acid chain; its full sequence is Protein STU1 (1249 aa).

Composition is skewed to low complexity over residues 138-156 (LNSS…TATK) and 555-574 (AASP…PSSA). Disordered stretches follow at residues 138 to 161 (LNSS…KPHE), 545 to 619 (KQLE…NPVF), 644 to 718 (HVET…LGLG), 755 to 846 (AEHE…NGNI), 860 to 891 (AFQT…RPEA), and 1084 to 1118 (HPAP…EKRT). Residues 581–600 (KKMDLKAMLAERRRAVKEAG) are compositionally biased toward basic and acidic residues. Composition is skewed to low complexity over residues 647-667 (TSSP…RIRP) and 708-718 (SPSLSPSLGLG). The span at 755 to 774 (AEHEVDELTLKEGQKTRDDG) shows a compositional bias: basic and acidic residues. 3 stretches are compositionally biased toward polar residues: residues 809–822 (QQGN…SGRV), 831–844 (ATGT…SRNG), and 863–878 (TPLN…SSAI). The span at 1089-1111 (SSSADNSDPMTSALSQLSLSSSK) shows a compositional bias: low complexity.

This sequence belongs to the CLASP family. Interacts with microtubules.

It localises to the cytoplasm. The protein localises to the cytoskeleton. The protein resides in the nucleus. Its subcellular location is the spindle. Its function is as follows. Microtubule binding protein that promotes the stabilization of dynamic microtubules. Required for mitotic spindle formation. The chain is Protein STU1 (STU1) from Cryptococcus neoformans var. neoformans serotype D (strain JEC21 / ATCC MYA-565) (Filobasidiella neoformans).